A 689-amino-acid polypeptide reads, in one-letter code: Transcription termination factor Rho (689 aa).

Over residues 1-20 (MPRTPKNQNLEQNTQTQSLT) the composition is skewed to polar residues. 2 disordered regions span residues 1–90 (MPRT…KQPV) and 151–213 (AQAQ…NRNN). The segment covering 52–65 (PKRRGRKPNPKTKA) has biased composition (basic residues). Composition is skewed to low complexity over residues 170–183 (NAQQ…QNGE) and 191–213 (NNQN…NRNN). Positions 287–362 (IIYTEGVLEV…RRIDRVNFEE (76 aa)) constitute a Rho RNA-BD domain. Residues 405-410 (GKGQRS), 417-422 (RTGKTV), and R448 contribute to the ATP site.

This sequence belongs to the Rho family. Homohexamer. The homohexamer assembles into an open ring structure.

Its function is as follows. Facilitates transcription termination by a mechanism that involves Rho binding to the nascent RNA, activation of Rho's RNA-dependent ATPase activity, and release of the mRNA from the DNA template. The chain is Transcription termination factor Rho from Fibrobacter succinogenes (strain ATCC 19169 / S85).